The sequence spans 82 residues: Mu-conotoxin MrVIA (82 aa).

An N-terminal signal peptide occupies residues 1–22 (MKLTCMMIVAVLFLTAWTLVMA). The propeptide occupies 23-49 (DDSNNGLANHFSKSRDEMEDPEASKLE). Intrachain disulfides connect Cys-53/Cys-71, Cys-60/Cys-76, and Cys-70/Cys-81.

In terms of tissue distribution, expressed by the venom duct.

The protein resides in the secreted. Its function is as follows. MuO-conotoxins are gating-modifier toxins that inhibit sodium current by trapping the domain II voltage sensor in the closed position to prevent opening of the sodium channel. This toxin inhibits rNav1.2/SCN2A (IC(50)=532 nM), rNav1.4/SCN4A (IC(50)=438 nM) and rNav1.7/SCN9A (IC(50)=345 nM). It blocks Nav channels by interacting mainly with the C-terminal part of the pore loop of domain-3. It does not bind on site 1. At small concentration, this toxin also acts as a calcium current agonist, whereas at higher doses it blocks fast-inactivating calcium current. The sequence is that of Mu-conotoxin MrVIA from Conus marmoreus (Marble cone).